The sequence spans 207 residues: Probable isochorismatase (207 aa).

This sequence belongs to the isochorismatase family.

It carries out the reaction isochorismate + H2O = (2S,3S)-2,3-dihydroxy-2,3-dihydrobenzoate + pyruvate. It participates in antibiotic biosynthesis; phenazine biosynthesis. Involved in the biosynthesis of the antibiotic phenazine, a nitrogen-containing heterocyclic molecule having important roles in virulence, competition and biological control. This isochorismatase may remove pyruvate from chorismate during the formation of the phenazine ring structure and/or stabilize the phenazine biosynthetic complex. The polypeptide is Probable isochorismatase (phzA) (Pseudomonas chlororaphis (Pseudomonas aureofaciens)).